Consider the following 185-residue polypeptide: Elongation factor P (185 aa).

This sequence belongs to the elongation factor P family.

It is found in the cytoplasm. It participates in protein biosynthesis; polypeptide chain elongation. Involved in peptide bond synthesis. Stimulates efficient translation and peptide-bond synthesis on native or reconstituted 70S ribosomes in vitro. Probably functions indirectly by altering the affinity of the ribosome for aminoacyl-tRNA, thus increasing their reactivity as acceptors for peptidyl transferase. This is Elongation factor P from Bacillus velezensis (strain DSM 23117 / BGSC 10A6 / LMG 26770 / FZB42) (Bacillus amyloliquefaciens subsp. plantarum).